Reading from the N-terminus, the 562-residue chain is Probable malate:quinone oxidoreductase (562 aa).

Residues 530 to 562 (EVPDKSATPPDPTIAPKHQHSPTHNANSEMQAL) are disordered. Positions 551 to 562 (PTHNANSEMQAL) are enriched in polar residues.

Belongs to the MQO family. FAD serves as cofactor.

It carries out the reaction (S)-malate + a quinone = a quinol + oxaloacetate. It functions in the pathway carbohydrate metabolism; tricarboxylic acid cycle; oxaloacetate from (S)-malate (quinone route): step 1/1. The protein is Probable malate:quinone oxidoreductase of Xylella fastidiosa (strain 9a5c).